The following is a 133-amino-acid chain: Histone H2A (133 aa).

Residues 1–10 (MTGGKSGGKA) show a composition bias toward gly residues. Positions 1–25 (MTGGKSGGKASGSKSSQSRSSKAGL) are disordered. Lys-5 and Lys-9 each carry N6-acetyllysine. Over residues 11–24 (SGSKSSQSRSSKAG) the composition is skewed to low complexity. At Gln-106 the chain carries N5-methylglutamine. Ser-130 carries the phosphoserine modification. The [ST]-Q motif motif lies at 130-131 (SQ).

This sequence belongs to the histone H2A family. The nucleosome is a histone octamer containing two molecules each of H2A, H2B, H3 and H4 assembled in one H3-H4 heterotetramer and two H2A-H2B heterodimers. The octamer wraps approximately 147 bp of DNA. Post-translationally, phosphorylated to form H2AS128ph (gamma-H2A) in response to DNA double-strand breaks (DSBs) generated by exogenous genotoxic agents and by stalled replication forks. Phosphorylation is dependent on the DNA damage checkpoint kinases MEC1/ATR and TEL1/ATM, spreads on either side of a detected DSB site and may mark the surrounding chromatin for recruitment of proteins required for DNA damage signaling and repair. Gamma-H2A is removed from the DNA prior to the strand invasion-primer extension step of the repair process and subsequently dephosphorylated. Dephosphorylation is necessary for efficient recovery from the DNA damage checkpoint. In terms of processing, acetylated by ESA1 to form H2AK4ac and H2AK7ac.

It is found in the nucleus. It localises to the chromosome. Functionally, core component of nucleosome which plays a central role in DNA double strand break (DSB) repair. Nucleosomes wrap and compact DNA into chromatin, limiting DNA accessibility to the cellular machineries which require DNA as a template. Histones thereby play a central role in transcription regulation, DNA repair, DNA replication and chromosomal stability. DNA accessibility is regulated via a complex set of post-translational modifications of histones, also called histone code, and nucleosome remodeling. In Coccidioides immitis (strain RS) (Valley fever fungus), this protein is Histone H2A (HTA1).